The following is a 145-amino-acid chain: Large-conductance mechanosensitive channel (145 aa).

Helical transmembrane passes span 14-34 (VMDL…VKSL), 38-58 (LIMP…YFLP), and 81-101 (GSFL…FLMV).

It belongs to the MscL family. As to quaternary structure, homopentamer.

The protein resides in the cell inner membrane. In terms of biological role, channel that opens in response to stretch forces in the membrane lipid bilayer. May participate in the regulation of osmotic pressure changes within the cell. The sequence is that of Large-conductance mechanosensitive channel from Rhizobium etli (strain CIAT 652).